A 66-amino-acid chain; its full sequence is Large ribosomal subunit protein bL35 (66 aa).

The disordered stretch occupies residues 1-23 (MPKMKTHRASAKRFKRTANGGLK).

It belongs to the bacterial ribosomal protein bL35 family.

This chain is Large ribosomal subunit protein bL35, found in Lactobacillus helveticus (strain DPC 4571).